We begin with the raw amino-acid sequence, 640 residues long: MQALEGVNTSPAAAAAAHAPAPRRGIAGLAVAAVGVVYGDIGTSPLYTLKEVFNGPHAVPVTPQNVYGILSLVFWALVLVVSAKYVLFITRADNRGEGGIMALTSLVLRAVPPGRKAWVLSALGVFGAALFYGDGMITPAISVLSAVEGLEVATPAFRPYVLPIALAVLCGLFVIQRHGTGSVGRIFGPVMLVWFVLLAVLGIAGITLHPEIIGALDPRWALRFFADMPLVGWLSLGAVVLAITGGEALYADMGHFGRRPIKFAWFLVVFPSLYLNYLGQGALILDHPDNVRNPFYLLVPDALVYPMVAMATLATIIASQAVISGAYSLTRQAMQLGYAPRMRTIFTSEREMGQIYVPSINWMLLGAVVALVVGFRSSSALASAYGIAVTLTMMIDTLLAFVVVRALWGWGRLQAGLFLGVFLAVDVAFFSATTVKILAGGWFPLLVGALIFTLLTTWKRGRELLNRRLRTDTIPLDTFIRSMFNSPSPRVDGTAVFLTTWLEGVPRALLHNLVHNKVLHHRVVLLTVETADVPHVPDSERVAVEELDYGFYRVRVNYGFKDDPDLPAALVRCADFGLKFAMMETSFFLGRETLVSRVGSGMPRWREKLFIVMFRNAGSAADYFHIPPNRVVELGTQVEL.

Transmembrane regions (helical) follow at residues 26 to 46 (IAGL…TSPL), 69 to 89 (ILSL…VLFI), 117 to 137 (AWVL…DGMI), 155 to 175 (PAFR…LFVI), 186 to 206 (IFGP…IAGI), 224 to 244 (FFAD…LAIT), 265 to 285 (WFLV…ALIL), 297 to 317 (LLVP…ATII), 355 to 375 (IYVP…VVGF), 384 to 404 (AYGI…FVVV), 415 to 435 (AGLF…ATTV), and 437 to 457 (ILAG…LLTT).

The protein belongs to the HAK/KUP transporter (TC 2.A.72) family.

The protein localises to the cell inner membrane. The enzyme catalyses K(+)(in) + H(+)(in) = K(+)(out) + H(+)(out). Functionally, transport of potassium into the cell. Likely operates as a K(+):H(+) symporter. The chain is Probable potassium transport system protein Kup from Aromatoleum aromaticum (strain DSM 19018 / LMG 30748 / EbN1) (Azoarcus sp. (strain EbN1)).